Here is a 330-residue protein sequence, read N- to C-terminus: Apolipoprotein E (330 aa).

The first 18 residues, 1 to 18, serve as a signal peptide directing secretion; sequence MKVLWAALVVALLAGCWA. Residues 21–43 form a disordered region; the sequence is EPESPLQGKPEPELEPELEPKRE. 7 tandem repeats follow at residues 96–117, 118–139, 140–161, 162–183, 184–205, 206–227, and 247–268. The segment at 96–268 is 7 X 22 AA approximate tandem repeats; it reads TLMEETMKEI…HLDEVREQME (173 aa). The residue at position 159 (Met-159) is a Methionine sulfoxide. Ser-163 carries the phosphoserine modification. An LDL and other lipoprotein receptors binding region spans residues 174-184; it reads HMRKLRKRVLR. 178-181 is a binding site for heparin; that stretch reads LRKR. The tract at residues 226–303 is lipid-binding and lipoprotein association; it reads HANLATQPLR…SWFEPLVEDM (78 aa). A heparin-binding site is contributed by 242–249; the sequence is GQQLRGRL. The tract at residues 279–330 is homooligomerization; the sequence is NQMRQQVEAFQARLKSWFEPLVEDMQRQWAGLVEKVQVAVGTSPTTPPLETK. The segment at 291–303 is specificity for association with VLDL; that stretch reads RLKSWFEPLVEDM.

The protein belongs to the apolipoprotein A1/A4/E family. Homotetramer. May interact with ABCA1; functionally associated with ABCA1 in the biogenesis of HDLs. May interact with APP/A4 amyloid-beta peptide; the interaction is extremely stable in vitro but its physiological significance is unclear. May interact with MAPT. May interact with MAP2. In the cerebrospinal fluid, interacts with secreted SORL1. Interacts with PMEL; this allows the loading of PMEL luminal fragment on ILVs to induce fibril nucleation. In terms of processing, APOE exists as multiple glycosylated and sialylated glycoforms within cells and in plasma. The extent of glycosylation and sialylation are tissue and context specific. Post-translationally, glycated in plasma VLDL. Phosphorylated by FAM20C in the extracellular medium.

The protein localises to the secreted. It localises to the extracellular space. The protein resides in the extracellular matrix. It is found in the extracellular vesicle. Its subcellular location is the endosome. The protein localises to the multivesicular body. APOE is an apolipoprotein, a protein associating with lipid particles, that mainly functions in lipoprotein-mediated lipid transport between organs via the plasma and interstitial fluids. APOE is a core component of plasma lipoproteins and is involved in their production, conversion and clearance. Apolipoproteins are amphipathic molecules that interact both with lipids of the lipoprotein particle core and the aqueous environment of the plasma. As such, APOE associates with chylomicrons, chylomicron remnants, very low density lipoproteins (VLDL) and intermediate density lipoproteins (IDL) but shows a preferential binding to high-density lipoproteins (HDL). It also binds a wide range of cellular receptors including the LDL receptor/LDLR, the LDL receptor-related proteins LRP1, LRP2 and LRP8 and the very low-density lipoprotein receptor/VLDLR that mediate the cellular uptake of the APOE-containing lipoprotein particles. Finally, APOE also has a heparin-binding activity and binds heparan-sulfate proteoglycans on the surface of cells, a property that supports the capture and the receptor-mediated uptake of APOE-containing lipoproteins by cells. A main function of APOE is to mediate lipoprotein clearance through the uptake of chylomicrons, VLDLs, and HDLs by hepatocytes. APOE is also involved in the biosynthesis by the liver of VLDLs as well as their uptake by peripheral tissues ensuring the delivery of triglycerides and energy storage in muscle, heart and adipose tissues. By participating in the lipoprotein-mediated distribution of lipids among tissues, APOE plays a critical role in plasma and tissues lipid homeostasis. APOE is also involved in two steps of reverse cholesterol transport, the HDLs-mediated transport of cholesterol from peripheral tissues to the liver, and thereby plays an important role in cholesterol homeostasis. First, it is functionally associated with ABCA1 in the biogenesis of HDLs in tissues. Second, it is enriched in circulating HDLs and mediates their uptake by hepatocytes. APOE also plays an important role in lipid transport in the central nervous system, regulating neuron survival and sprouting. In Neomonachus schauinslandi (Hawaiian monk seal), this protein is Apolipoprotein E (APOE).